The chain runs to 178 residues: MTQMPAGDVPGMGRRQFMNLLTFGSVTGVALGALYPVVNYFIPPRAAGSGGGTSAKDELGNAVTASGWLSTHPAGDRSLVQGLKGDPTYLIVEGDDAIGSYGINAICTHLGCVVPWNSGANKFMCPCHGSQYDATGKVVRGPAPLSLALANVSVENDNVFVSQWTDTDFRTGEKPWWA.

The helical transmembrane segment at Leu-20 to Ile-42 threads the bilayer. The Rieske domain occupies Thr-71 to Val-161. [2Fe-2S] cluster contacts are provided by Cys-107, His-109, Cys-125, and His-128. Cys-112 and Cys-127 are disulfide-bonded.

It belongs to the Rieske iron-sulfur protein family. The 4 large subunits of the cytochrome b6-f complex are cytochrome b6, subunit IV (17 kDa polypeptide, PetD), cytochrome f and the Rieske protein, while the 4 small subunits are PetG, PetL, PetM and PetN. The complex functions as a dimer. It depends on [2Fe-2S] cluster as a cofactor.

It localises to the cellular thylakoid membrane. It catalyses the reaction 2 oxidized [plastocyanin] + a plastoquinol + 2 H(+)(in) = 2 reduced [plastocyanin] + a plastoquinone + 4 H(+)(out). Functionally, component of the cytochrome b6-f complex, which mediates electron transfer between photosystem II (PSII) and photosystem I (PSI), cyclic electron flow around PSI, and state transitions. This chain is Cytochrome b6-f complex iron-sulfur subunit, found in Synechococcus sp. (strain WH7803).